The primary structure comprises 860 residues: Leucine--tRNA ligase (860 aa).

The 'HIGH' region signature appears at 42-52 (PYPSGRLHMGH). The 'KMSKS' region signature appears at 619–623 (KMSKS). An ATP-binding site is contributed by Lys622.

This sequence belongs to the class-I aminoacyl-tRNA synthetase family.

Its subcellular location is the cytoplasm. The enzyme catalyses tRNA(Leu) + L-leucine + ATP = L-leucyl-tRNA(Leu) + AMP + diphosphate. In Yersinia pseudotuberculosis serotype O:3 (strain YPIII), this protein is Leucine--tRNA ligase.